Here is a 359-residue protein sequence, read N- to C-terminus: Membrane-bound lytic murein transglycosylase C (359 aa).

The first 16 residues, 1-16 (MKKYLALALIAPLLIS), serve as a signal peptide directing secretion. A lipid anchor (N-palmitoyl cysteine) is attached at Cys17. Cys17 carries the S-diacylglycerol cysteine lipid modification.

This sequence belongs to the transglycosylase Slt family.

It localises to the cell outer membrane. The enzyme catalyses Exolytic cleavage of the (1-&gt;4)-beta-glycosidic linkage between N-acetylmuramic acid (MurNAc) and N-acetylglucosamine (GlcNAc) residues in peptidoglycan, from either the reducing or the non-reducing ends of the peptidoglycan chains, with concomitant formation of a 1,6-anhydrobond in the MurNAc residue.. Functionally, murein-degrading enzyme. May play a role in recycling of muropeptides during cell elongation and/or cell division. This is Membrane-bound lytic murein transglycosylase C from Escherichia coli O8 (strain IAI1).